The primary structure comprises 382 residues: Succinate--CoA ligase [ADP-forming] subunit beta (382 aa).

The region spanning 9–240 (KELFSKYGVK…PRDVTEFEAY (232 aa)) is the ATP-grasp domain. ATP-binding positions include Lys45, 52-54 (GRG), Val94, and Glu99. Mg(2+)-binding residues include Asn193 and Asp207. Substrate is bound by residues Asn260 and 317–319 (GIT).

It belongs to the succinate/malate CoA ligase beta subunit family. As to quaternary structure, heterotetramer of two alpha and two beta subunits. The cofactor is Mg(2+).

It carries out the reaction succinate + ATP + CoA = succinyl-CoA + ADP + phosphate. The enzyme catalyses GTP + succinate + CoA = succinyl-CoA + GDP + phosphate. It functions in the pathway carbohydrate metabolism; tricarboxylic acid cycle; succinate from succinyl-CoA (ligase route): step 1/1. Functionally, succinyl-CoA synthetase functions in the citric acid cycle (TCA), coupling the hydrolysis of succinyl-CoA to the synthesis of either ATP or GTP and thus represents the only step of substrate-level phosphorylation in the TCA. The beta subunit provides nucleotide specificity of the enzyme and binds the substrate succinate, while the binding sites for coenzyme A and phosphate are found in the alpha subunit. The polypeptide is Succinate--CoA ligase [ADP-forming] subunit beta (Pyrobaculum aerophilum (strain ATCC 51768 / DSM 7523 / JCM 9630 / CIP 104966 / NBRC 100827 / IM2)).